The sequence spans 178 residues: Inorganic pyrophosphatase (178 aa).

Positions 30, 44, and 56 each coordinate substrate. Aspartate 66, aspartate 71, and aspartate 103 together coordinate Mg(2+). Substrate is bound at residue tyrosine 142.

Belongs to the PPase family. Homohexamer. The cofactor is Mg(2+).

The protein localises to the cytoplasm. The enzyme catalyses diphosphate + H2O = 2 phosphate + H(+). Catalyzes the hydrolysis of inorganic pyrophosphate (PPi) forming two phosphate ions. This chain is Inorganic pyrophosphatase, found in Bradyrhizobium diazoefficiens (strain JCM 10833 / BCRC 13528 / IAM 13628 / NBRC 14792 / USDA 110).